A 312-amino-acid polypeptide reads, in one-letter code: tRNA pseudouridine synthase B (312 aa).

The Nucleophile role is filled by Asp-49.

This sequence belongs to the pseudouridine synthase TruB family. Type 1 subfamily.

It carries out the reaction uridine(55) in tRNA = pseudouridine(55) in tRNA. Its function is as follows. Responsible for synthesis of pseudouridine from uracil-55 in the psi GC loop of transfer RNAs. The sequence is that of tRNA pseudouridine synthase B from Chelativorans sp. (strain BNC1).